The primary structure comprises 211 residues: Metalloproteinase inhibitor 3 (211 aa).

The signal sequence occupies residues 1-23 (MTPWLGLIVLLGSWSLGDWGAEA). C24 provides a ligand contact to Zn(2+). Involved in metalloproteinase-binding regions lie at residues 24–27 (CTCS) and 88–89 (ES). Intrachain disulfides connect C24/C91, C26/C118, C36/C143, C145/C192, C150/C155, and C163/C184. In terms of domain architecture, NTR spans 24-143 (CTCSPSHPQD…GLNYRYHLGC (120 aa)). Positions 105-188 (TGRVYDGKMY…SKHYACIRQK (84 aa)) are mediates interaction with EFEMP1. Residue N207 is glycosylated (N-linked (GlcNAc...) asparagine).

Belongs to the protease inhibitor I35 (TIMP) family. Interacts with EFEMP1. Interacts with KDR.

It is found in the secreted. The protein resides in the extracellular space. Its subcellular location is the extracellular matrix. In terms of biological role, mediates a variety of processes including matrix regulation and turnover, inflammation, and angiogenesis, through reversible inhibition of zinc protease superfamily enzymes, primarily matrix metalloproteinases (MMPs). Regulates extracellular matrix (ECM) remodeling through inhibition of matrix metalloproteinases (MMP) including MMP-1, MMP-2, MMP-3, MMP-7, MMP-9, MMP-13, MMP-14 and MMP-15. Additionally, modulates the processing of amyloid precursor protein (APP) and apolipoprotein E receptor ApoER2 by inhibiting two alpha-secretases ADAM10 and ADAM17. Functions as a tumor suppressor and a potent inhibitor of angiogenesis. Exerts its anti-angiogenic effect by directly interacting with vascular endothelial growth factor (VEGF) receptor-2/KDR, preventing its binding to the VEGFA ligand. Selectively induces apoptosis in angiogenic endothelial cells through a caspase-independent cell death pathway. Mechanistically, inhibits matrix-induced focal adhesion kinase PTK2 tyrosine phosphorylation and association with paxillin/PXN and disrupts the incorporation of ITGB3, PTK2 and PXN into focal adhesion contacts on the matrix. The protein is Metalloproteinase inhibitor 3 (TIMP3) of Macaca mulatta (Rhesus macaque).